The chain runs to 121 residues: MALDKDQFIEDLKGASITDLNDLVKAIEDEFGVSAAAPVAAAGAAGGAAEAKTSFNVELTSGGSAKIKVIKAVREITGAGLKDAKDMVDNAPSVIKEDVSEDEANELKAKLEEAGATVEVK.

The protein belongs to the bacterial ribosomal protein bL12 family. In terms of assembly, homodimer. Part of the ribosomal stalk of the 50S ribosomal subunit. Forms a multimeric L10(L12)X complex, where L10 forms an elongated spine to which 2 to 4 L12 dimers bind in a sequential fashion. Binds GTP-bound translation factors.

Its function is as follows. Forms part of the ribosomal stalk which helps the ribosome interact with GTP-bound translation factors. Is thus essential for accurate translation. This is Large ribosomal subunit protein bL12 from Pediococcus pentosaceus (strain ATCC 25745 / CCUG 21536 / LMG 10740 / 183-1w).